The primary structure comprises 1849 residues: Brefeldin A-inhibited guanine nucleotide-exchange protein 1 (1849 aa).

The segment at 2-224 is DCB; DCB:DCB and DCB:HUS domain interaction; it reads YEGKKTKNMF…QEAKQMEKER (223 aa). The span at 46 to 58 shows a compositional bias: basic and acidic residues; that stretch reads AETEKQSPPHGEA. Disordered stretches follow at residues 46–65, 216–301, and 350–413; these read AETE…SSTL, EAKQ…ADQA, and INVS…SPGA. A phosphoserine mark is found at serine 52, serine 286, serine 289, and serine 290. 2 stretches are compositionally biased toward polar residues: residues 350-360 and 394-409; these read INVSADGNNGT and SVSS…SSGP. Phosphoserine occurs at positions 397 and 410. The segment at 557–577 is HUS; DCB:HUS domain interaction; sequence ADAQSVVDIYVNYDCDLNAAN. Positions 634–687 are disordered; the sequence is PNSQTTLGQEKPSEQETSEMKHPETINRYGSLNSLESTSSSGIGSYSTQMSGTD. A compositionally biased stretch (basic and acidic residues) spans 644 to 658; it reads KPSEQETSEMKHPET. A compositionally biased stretch (low complexity) spans 664–684; the sequence is SLNSLESTSSSGIGSYSTQMS. The region spanning 709 to 840 is the SEC7 domain; that stretch reads FTKKPKRGIQ…IIMLTTDLHS (132 aa). Positions 711-715 match the Nuclear localization signal (NLS) motif; that stretch reads KKPKR. A phosphoserine mark is found at serine 1079, serine 1566, and serine 1569.

As to quaternary structure, homodimer. Interacts with ARFGEF2/BIG2; both proteins are probably part of the same or very similar macromolecular complexes. Interacts with FKBP2. Interacts with MYO9B. Interacts with PRKAR1A and PRKAR2A. Interacts with PPP1CC. Interacts with NCL, FBL, NUP62 and U3 small nucleolar RNA. Interacts with DPY30. Interacts with PDE3A. Interacts with KANK1. Interacts with TBC1D22A and TBC1D22B. Phosphorylated. In vitro phosphorylated by PKA reducing its GEF activity and dephosphorylated by phosphatase PP1. As to expression, abundantly expressed in kidney, somewhat less abundant in lung, spleen, and brain, and still less abundant in heart.

The protein resides in the cytoplasm. The protein localises to the perinuclear region. It is found in the golgi apparatus. It localises to the trans-Golgi network. Its subcellular location is the nucleus. The protein resides in the nucleolus. The protein localises to the nucleus matrix. It is found in the membrane. With respect to regulation, inhibited by brefeldin A. In terms of biological role, promotes guanine-nucleotide exchange on ARF1 and ARF3. Promotes the activation of ARF1/ARF3 through replacement of GDP with GTP. Involved in vesicular trafficking. Required for the maintenance of Golgi structure; the function may be independent of its GEF activity. Required for the maturation of integrin beta-1 in the Golgi. Involved in the establishment and persistence of cell polarity during directed cell movement in wound healing. Proposed to act as A kinase-anchoring protein (AKAP) and may mediate crosstalk between Arf and PKA pathways. Inhibits GAP activity of MYO9B probably through competitive RhoA binding. The function in the nucleus remains to be determined. In Bos taurus (Bovine), this protein is Brefeldin A-inhibited guanine nucleotide-exchange protein 1 (ARFGEF1).